The sequence spans 204 residues: Phosphoheptose isomerase (204 aa).

The SIS domain occupies 38 to 199; sequence MAVALARGGK…LFEAVMELGP (162 aa). 53–55 lines the substrate pocket; that stretch reads NGG. The Zn(2+) site is built by His-62 and Glu-66. Substrate is bound by residues Glu-66, 95-96, 121-123, Ser-126, and Gln-172; these read ND and STS. Residues Gln-172 and His-180 each contribute to the Zn(2+) site.

Belongs to the SIS family. GmhA subfamily. As to quaternary structure, homotetramer. It depends on Zn(2+) as a cofactor.

It localises to the cytoplasm. The catalysed reaction is 2 D-sedoheptulose 7-phosphate = D-glycero-alpha-D-manno-heptose 7-phosphate + D-glycero-beta-D-manno-heptose 7-phosphate. Its pathway is carbohydrate biosynthesis; D-glycero-D-manno-heptose 7-phosphate biosynthesis; D-glycero-alpha-D-manno-heptose 7-phosphate and D-glycero-beta-D-manno-heptose 7-phosphate from sedoheptulose 7-phosphate: step 1/1. Catalyzes the isomerization of sedoheptulose 7-phosphate in D-glycero-D-manno-heptose 7-phosphate. The protein is Phosphoheptose isomerase of Solidesulfovibrio magneticus (strain ATCC 700980 / DSM 13731 / RS-1) (Desulfovibrio magneticus).